A 371-amino-acid polypeptide reads, in one-letter code: tRNA-specific 2-thiouridylase MnmA 2 (371 aa).

ATP is bound by residues 13-20 (GMSGGVDS) and methionine 39. The interaction with target base in tRNA stretch occupies residues 99–101 (NPD). Cysteine 104 (nucleophile) is an active-site residue. Cysteine 104 and cysteine 200 are joined by a disulfide. Position 128 (glycine 128) interacts with ATP. The segment at 150–152 (KDQ) is interaction with tRNA. Catalysis depends on cysteine 200, which acts as the Cysteine persulfide intermediate. The segment at 308–309 (RY) is interaction with tRNA.

Belongs to the MnmA/TRMU family.

It localises to the cytoplasm. It catalyses the reaction S-sulfanyl-L-cysteinyl-[protein] + uridine(34) in tRNA + AH2 + ATP = 2-thiouridine(34) in tRNA + L-cysteinyl-[protein] + A + AMP + diphosphate + H(+). In terms of biological role, catalyzes the 2-thiolation of uridine at the wobble position (U34) of tRNA, leading to the formation of s(2)U34. The polypeptide is tRNA-specific 2-thiouridylase MnmA 2 (Geobacillus kaustophilus (strain HTA426)).